Here is a 500-residue protein sequence, read N- to C-terminus: Probable malate:quinone oxidoreductase (500 aa).

Belongs to the MQO family. FAD is required as a cofactor.

It catalyses the reaction (S)-malate + a quinone = a quinol + oxaloacetate. It functions in the pathway carbohydrate metabolism; tricarboxylic acid cycle; oxaloacetate from (S)-malate (quinone route): step 1/1. The chain is Probable malate:quinone oxidoreductase from Bacillus cereus (strain G9842).